The following is a 265-amino-acid chain: Mlc titration factor A (265 aa).

Residues H111, H148, H152, and E211 each contribute to the Zn(2+) site.

It belongs to the MtfA family. Interacts with Mlc. It depends on Zn(2+) as a cofactor.

It localises to the cytoplasm. In terms of biological role, involved in the modulation of the activity of the glucose-phosphotransferase system (glucose-PTS). Interacts with the transcriptional repressor Mlc, preventing its interaction with DNA and leading to the modulation of expression of genes regulated by Mlc, including ptsG, which encodes the PTS system glucose-specific EIICB component. Its function is as follows. Shows zinc-dependent metallopeptidase activity. This is Mlc titration factor A from Shigella sonnei (strain Ss046).